We begin with the raw amino-acid sequence, 279 residues long: NH(3)-dependent NAD(+) synthetase (279 aa).

46–53 (GVSGGQDS) lines the ATP pocket. Asp52 lines the Mg(2+) pocket. Arg139 provides a ligand contact to deamido-NAD(+). Thr159 contacts ATP. Glu164 is a binding site for Mg(2+). Deamido-NAD(+) is bound by residues Lys172 and Asp179. ATP-binding residues include Lys188 and Thr210. Residue 259-260 (HK) participates in deamido-NAD(+) binding.

It belongs to the NAD synthetase family. In terms of assembly, homodimer.

The enzyme catalyses deamido-NAD(+) + NH4(+) + ATP = AMP + diphosphate + NAD(+) + H(+). The protein operates within cofactor biosynthesis; NAD(+) biosynthesis; NAD(+) from deamido-NAD(+) (ammonia route): step 1/1. Its function is as follows. Catalyzes the ATP-dependent amidation of deamido-NAD to form NAD. Uses ammonia as a nitrogen source. In Leifsonia xyli subsp. xyli (strain CTCB07), this protein is NH(3)-dependent NAD(+) synthetase.